Consider the following 137-residue polypeptide: 5-hydroxytryptamine receptor 4 (137 aa).

The chain crosses the membrane as a helical span at residues 12–35; that stretch reads TPLRVAVLLAGCWAIPVLISFLPI. Asn58 carries an N-linked (GlcNAc...) asparagine glycan. Residues 67–90 form a helical membrane-spanning segment; it reads NKPYAITCSVVAFYIPFLLMVLAY. The interval 112-137 is disordered; sequence APAEGRPPSADQHSTHRMRTETKAAK.

The protein belongs to the G-protein coupled receptor 1 family. In terms of assembly, interacts (via C-terminus 330-346 AA) with GRK5; this interaction is promoted by 5-HT (serotonin).

The protein resides in the cell membrane. It is found in the endosome membrane. Functionally, G-protein coupled receptor for 5-hydroxytryptamine (serotonin), a biogenic hormone that functions as a neurotransmitter, a hormone and a mitogen. Ligand binding causes a conformation change that triggers signaling via guanine nucleotide-binding proteins (G proteins) and modulates the activity of downstream effectors. HTR4 is coupled to G(s) G alpha proteins and mediates activation of adenylate cyclase activity. In Sus scrofa (Pig), this protein is 5-hydroxytryptamine receptor 4 (HTR4).